The primary structure comprises 161 residues: Putative allophycocyanin subunit alpha 2 (161 aa).

An N4-methylasparagine modification is found at Asn-71. Position 81 (Cys-81) interacts with (2R,3E)-phycocyanobilin.

Belongs to the phycobiliprotein family. In terms of assembly, heterohexamer of two alpha chains, one alpha-B chain and three beta chains. Post-translationally, contains one covalently linked phycocyanobilin chromophore. The chromophore is added by phycocyanobilin lyase CpcS 1.

The protein localises to the cellular thylakoid membrane. Functionally, light-harvesting photosynthetic bile pigment-protein from the phycobiliprotein complex. Allophycocyanin has a maximum absorption at approximately 650 to 653 nanometers. The chain is Putative allophycocyanin subunit alpha 2 (apcA2) from Nostoc sp. (strain PCC 7120 / SAG 25.82 / UTEX 2576).